Reading from the N-terminus, the 460-residue chain is Diguanylate cyclase DosC (460 aa).

Residue histidine 98 coordinates heme. The GGDEF domain occupies 325-458 (TPLSVLIIDV…GRNRVELWKA (134 aa)). Aspartate 333 provides a ligand contact to Mg(2+). The substrate site is built by asparagine 341 and aspartate 350. Residue aspartate 376 coordinates Mg(2+). Aspartate 376 (proton acceptor) is an active-site residue.

Heme serves as cofactor. The cofactor is Mg(2+).

The catalysed reaction is 2 GTP = 3',3'-c-di-GMP + 2 diphosphate. Its pathway is purine metabolism; 3',5'-cyclic di-GMP biosynthesis. Functionally, globin-coupled heme-based oxygen sensor protein displaying diguanylate cyclase (DGC) activity in response to oxygen availability. Thus, catalyzes the synthesis of cyclic diguanylate (c-di-GMP) via the condensation of 2 GTP molecules. Cyclic-di-GMP is a second messenger which controls cell surface-associated traits in bacteria. This is Diguanylate cyclase DosC (dosC) from Escherichia coli O157:H7.